The chain runs to 446 residues: MKVVVVGCTHAGTSAVKSILANHPEAEVTVYERNDNISFLSCGIALYVGGVVKNAADLFYSNPEELASLGATVKMEHNVEEINVDDKTVTAKNLQTGATETVSYDKLVMTTGSWPIIPPIPGIDAENILLCKNYSQANVIIEKAKDAKRVVVVGGGYIGIELVEAFVESGKQVTLVDGLDRILNKYLDKPFTDVLEKELVDRGVNLALGENVQQFVADEQGKVAKVITPSQEFEADMVIMCVGFRPNTELLKDKVDMLPNGAIEVNEYMQTSNPDIFAAGDSAVVHYNPSQTKNYIPLATNAVRQGMLVGRNLTEQKLAYRGTQGTSGLYLFGWKIGSTGVTKESAKLNGLDVEATVFEDNYRPEFMPTTEKVLMELVYEKGTQRIVGGQLMSKYDITQSANTLSLAVQNKMTVEDLAISDFFFQPHFDRPWNYLNLLAQAALENM.

FAD contacts are provided by residues 7–11 (GCTHA), E32, C42, V79, 110–113 (TTGS), K132, and Y157. Catalysis depends on H10, which acts as the Proton acceptor. The active-site Redox-active is C42. C42 carries the cysteine sulfinic acid (-SO2H) modification. Residues 150–165 (VVVVGGGYIGIELVEA), D177, Y186, and G243 each bind NAD(+). FAD is bound by residues 271–281 (TSNPDIFAAGD), L298, A299, and T300. Residue G328 coordinates NAD(+). F424 contacts FAD.

It belongs to the class-III pyridine nucleotide-disulfide oxidoreductase family. Homodimer. FAD is required as a cofactor. The N-terminus is blocked.

It catalyses the reaction 2 NADH + O2 + 2 H(+) = 2 NAD(+) + 2 H2O. Functionally, catalyzes the four-electron reduction of molecular oxygen to water. The sequence is that of NADH oxidase (nox) from Enterococcus faecalis (strain ATCC 700802 / V583).